Consider the following 310-residue polypeptide: Aspartate carbamoyltransferase catalytic subunit 3 (310 aa).

R55 and T56 together coordinate carbamoyl phosphate. An L-aspartate-binding site is contributed by K85. 3 residues coordinate carbamoyl phosphate: R106, H134, and Q137. Positions 167 and 228 each coordinate L-aspartate. L266 and P267 together coordinate carbamoyl phosphate.

The protein belongs to the aspartate/ornithine carbamoyltransferase superfamily. ATCase family. In terms of assembly, heterododecamer (2C3:3R2) of six catalytic PyrB chains organized as two trimers (C3), and six regulatory PyrI chains organized as three dimers (R2).

It catalyses the reaction carbamoyl phosphate + L-aspartate = N-carbamoyl-L-aspartate + phosphate + H(+). It functions in the pathway pyrimidine metabolism; UMP biosynthesis via de novo pathway; (S)-dihydroorotate from bicarbonate: step 2/3. Catalyzes the condensation of carbamoyl phosphate and aspartate to form carbamoyl aspartate and inorganic phosphate, the committed step in the de novo pyrimidine nucleotide biosynthesis pathway. This is Aspartate carbamoyltransferase catalytic subunit 3 from Shewanella halifaxensis (strain HAW-EB4).